Reading from the N-terminus, the 137-residue chain is Phosphatidylinositol N-acetylglucosaminyltransferase subunit P (137 aa).

2 helical membrane passes run 16-36 (VYGFVGSISIVVATVIFLIWG) and 58-78 (MAMPMYSMVTLLVALVFYIGL).

It belongs to the PIGP family.

It is found in the membrane. It carries out the reaction a 1,2-diacyl-sn-glycero-3-phospho-(1D-myo-inositol) + UDP-N-acetyl-alpha-D-glucosamine = a 6-(N-acetyl-alpha-D-glucosaminyl)-1-(1,2-diacyl-sn-glycero-3-phospho)-1D-myo-inositol + UDP + H(+). It participates in glycolipid biosynthesis; glycosylphosphatidylinositol-anchor biosynthesis. Part of the complex catalyzing the transfer of N-acetylglucosamine from UDP-N-acetylglucosamine to phosphatidylinositol, the first step of GPI biosynthesis. This Arabidopsis thaliana (Mouse-ear cress) protein is Phosphatidylinositol N-acetylglucosaminyltransferase subunit P.